We begin with the raw amino-acid sequence, 252 residues long: 3-deoxy-manno-octulosonate cytidylyltransferase (252 aa).

It belongs to the KdsB family.

It is found in the cytoplasm. The catalysed reaction is 3-deoxy-alpha-D-manno-oct-2-ulosonate + CTP = CMP-3-deoxy-beta-D-manno-octulosonate + diphosphate. The protein operates within nucleotide-sugar biosynthesis; CMP-3-deoxy-D-manno-octulosonate biosynthesis; CMP-3-deoxy-D-manno-octulosonate from 3-deoxy-D-manno-octulosonate and CTP: step 1/1. Its pathway is bacterial outer membrane biogenesis; lipopolysaccharide biosynthesis. Its function is as follows. Activates KDO (a required 8-carbon sugar) for incorporation into bacterial lipopolysaccharide in Gram-negative bacteria. This chain is 3-deoxy-manno-octulosonate cytidylyltransferase, found in Rhodospirillum rubrum (strain ATCC 11170 / ATH 1.1.1 / DSM 467 / LMG 4362 / NCIMB 8255 / S1).